The chain runs to 336 residues: Protein-arginine N-acetylglucosaminyltransferase SseK1 (336 aa).

The N-beta-linked (GlcNAc) arginine; by autocatalysis glycan is linked to R24. Residues 50–52 and Y74 contribute to the UDP-N-acetyl-alpha-D-glucosamine site; that span reads QWF. An N-beta-linked (GlcNAc) arginine; by autocatalysis glycan is attached at R152. The DXD motif signature appears at 223–225; that stretch reads DAD. 224-225 serves as a coordination point for UDP-N-acetyl-alpha-D-glucosamine; the sequence is AD. Position 225 (D225) interacts with Mn(2+). Catalysis depends on E255, which acts as the Proton acceptor. The Mn(2+) site is built by N322 and S324. The UDP-N-acetyl-alpha-D-glucosamine site is built by S324 and S329. N-beta-linked (GlcNAc) arginine; by autocatalysis glycosylation occurs at R333.

Belongs to the glycosyltransferase NleB family. The cofactor is Mn(2+). In terms of processing, auto-glycosylated: arginine GlcNAcylation is required for activity toward death domain-containing host target proteins.

Its subcellular location is the secreted. It is found in the host cytoplasm. It localises to the host cytosol. The catalysed reaction is L-arginyl-[protein] + UDP-N-acetyl-alpha-D-glucosamine = N(omega)-(N-acetyl-beta-D-glucosaminyl)-L-arginyl-[protein] + UDP + H(+). Protein-arginine N-acetylglucosaminyltransferase activity is inhibited by 100066N compound (flavone analog) and 102644N compound (a substituted isoxazole). Functionally, protein-arginine N-acetylglucosaminyltransferase effector that disrupts TNF signaling in infected cells, including NF-kappa-B signaling, apoptosis and necroptosis. Acts by catalyzing the transfer of a single N-acetylglucosamine (GlcNAc) to a conserved arginine residue in the death domain of host proteins TRADD and, to a lower extent, FADD: arginine GlcNAcylation prevents homotypic/heterotypic death domain interactions and assembly of the oligomeric TNF-alpha receptor complex, thereby disrupting TNF signaling. Also acts on host proteins without a death domain: catalyzes arginine GlcNAcylation of host GAPDH protein, thereby preventing GAPDH interaction with TRAF2, leading to inhibit NF-kappa-B signaling. Catalyzes GlcNAcylation of host tubulin-folding cofactor TBCB, thereby promoting microtubule stability. Also mediates auto-GlcNAcylation, which is required for activity toward death domain-containing host target proteins. The chain is Protein-arginine N-acetylglucosaminyltransferase SseK1 from Salmonella enteritidis (strain 2009K0958).